Reading from the N-terminus, the 2813-residue chain is von Willebrand factor (2813 aa).

An N-terminal signal peptide occupies residues 1 to 22 (MIPARFAGVLLALALILPGTLC). The 169-residue stretch at 33-201 (ARCSLFGSDF…ALSSGEQWCE (169 aa)) folds into the VWFD 1 domain. Disulfide bonds link Cys-35–Cys-162 and Cys-57–Cys-200. 3 N-linked (GlcNAc...) asparagine glycosylation sites follow: Asn-99, Asn-156, and Asn-211. The TIL 1 domain occupies 295–348 (CPAGMEYRQCVSPCARTCQSLHINEMCQERCVDGCSCPEGQLLDEGLCVESTEC). Residues 386-560 (GECLVTGQSH…NAWKLHGDCQ (175 aa)) enclose the VWFD 2 domain. Intrachain disulfides connect Cys-388–Cys-524, Cys-410–Cys-559, and Cys-432–Cys-440. TIL domains follow at residues 652–707 (CPKG…KAQC) and 776–827 (CPAD…LERC). N-linked (GlcNAc...) asparagine glycosylation is present at Asn-666. Residues 764–787 (SLSCRPPMVKLVCPADNLRAEGLE) are amino-terminal. Cystine bridges form between Cys-767/Cys-808, Cys-776/Cys-804, and Cys-810/Cys-821. The tract at residues 788–833 (CTKTCQNYDLECMSMGCVSGCLCPPGMVRHENRCVALERCPCFHQG) is E1. The CX stretch occupies residues 826–853 (RCPCFHQGKEYAPGETVKIGCNTCVCQD). Asn-857 carries an N-linked (GlcNAc...) asparagine glycan. The 168-residue stretch at 865–1032 (ATCSTIGMAH…NSWKVSSQCA (168 aa)) folds into the VWFD 3 domain. Disulfide bonds link Cys-867-Cys-996, Cys-889-Cys-1031, Cys-898-Cys-993, Cys-914-Cys-921, Cys-1060-Cys-1084, Cys-1071-Cys-1111, Cys-1089-Cys-1091, and Cys-1126-Cys-1130. The TIL 4 domain maps to 1146-1196 (YNSCAPACQVTCQHPEPLACPVQCVEGCHAHCPPGKILDELLQTCVDPEDC). Residue Asn-1147 is glycosylated (N-linked (GlcNAc...) asparagine; atypical). 3 disulfides stabilise this stretch: Cys-1149–Cys-1169, Cys-1153–Cys-1165, and Cys-1196–Cys-1199. An N-linked (GlcNAc...) asparagine glycan is attached at Asn-1231. Residues Cys-1234 and Cys-1237 are joined by a disulfide bond. Thr-1248, Thr-1255, and Thr-1256 each carry an O-linked (GalNAc...) threonine glycan. Ser-1263 carries an O-linked (GalNAc...) serine glycan. Cysteines 1272 and 1458 form a disulfide. The VWFA 1; binding site for platelet glycoprotein Ib domain maps to 1277–1453 (DLVFLLDGSS…DELEQQRDEI (177 aa)). O-linked (GalNAc...) threonine glycosylation is found at Thr-1468 and Thr-1477. A glycan (O-linked (GalNAc...) serine) is linked at Ser-1486. A glycan (O-linked (GalNAc...) threonine) is linked at Thr-1487. Residues 1498 to 1665 (DVAFVLEGSD…TLPREAPDLV (168 aa)) form the VWFA 2 domain. N-linked (GlcNAc...) (complex) asparagine glycosylation is present at Asn-1515. A glycan (N-linked (GlcNAc...) asparagine) is linked at Asn-1574. Cys-1669 and Cys-1670 form a disulfide bridge. Residue Thr-1679 is glycosylated (O-linked (GalNAc...) threonine). 7 cysteine pairs are disulfide-bonded: Cys-1686–Cys-1872, Cys-1879–Cys-1904, Cys-1899–Cys-1940, Cys-1927–Cys-2088, Cys-1950–Cys-2085, Cys-1972–Cys-2123, and Cys-1993–Cys-2001. The region spanning 1691–1871 (DVILLLDGSS…TLGNSFLHKL (181 aa)) is the VWFA 3; main binding site for collagens type I and III domain. In terms of domain architecture, VWFD 4 spans 1948 to 2124 (CVCTGSSTRH…TVQRPGQTCQ (177 aa)). Residues 2216–2261 (CPRHCDGNVSSCGDHPSEGCFCPPDKVMLEGSCVPEEACTQCIGED) are E2. Asn-2223 and Asn-2290 each carry an N-linked (GlcNAc...) asparagine glycan. Residues 2255–2328 (TQCIGEDGVQ…CCPEYECVCD (74 aa)) enclose the VWFC 1 domain. Thr-2298 carries O-linked (GalNAc...) threonine glycosylation. N-linked (GlcNAc...) asparagine glycans are attached at residues Asn-2357 and Asn-2400. Residues 2429–2495 (KVCVHRSTIY…HEGECCGRCL (67 aa)) form the VWFC 2 domain. The Cell attachment site signature appears at 2507-2509 (RGD). N-linked (GlcNAc...) asparagine glycans are attached at residues Asn-2546 and Asn-2585. The VWFC 3 domain maps to 2580-2645 (EACMLNGTVI…NTGECCGRCL (66 aa)). Cystine bridges form between Cys-2724-Cys-2774, Cys-2739-Cys-2788, Cys-2750-Cys-2804, and Cys-2754-Cys-2806. A CTCK domain is found at 2724 to 2812 (CNDITARLQY…ECKCSPRKCS (89 aa)). N-linked (GlcNAc...) asparagine glycosylation occurs at Asn-2790.

Multimeric. Interacts with F8. All cysteine residues are involved in intrachain or interchain disulfide bonds. In terms of processing, N- and O-glycosylated. Plasma.

It is found in the secreted. The protein resides in the extracellular space. It localises to the extracellular matrix. Important in the maintenance of hemostasis, it promotes adhesion of platelets to the sites of vascular injury by forming a molecular bridge between sub-endothelial collagen matrix and platelet-surface receptor complex GPIb-IX-V. Also acts as a chaperone for coagulation factor VIII, delivering it to the site of injury, stabilizing its heterodimeric structure and protecting it from premature clearance from plasma. This is von Willebrand factor (VWF) from Homo sapiens (Human).